A 151-amino-acid polypeptide reads, in one-letter code: Probable desiccation-related protein LEA14 (151 aa).

The protein belongs to the LEA type 2 family.

This Arabidopsis thaliana (Mouse-ear cress) protein is Probable desiccation-related protein LEA14 (LEA14).